The chain runs to 316 residues: NADH-quinone oxidoreductase subunit H (316 aa).

A run of 8 helical transmembrane segments spans residues 6–26 (PAVV…LIWV), 74–94 (FVIA…VVPF), 98–118 (VGVI…SLAV), 145–165 (ISYE…AGSF), 177–197 (GWYV…AVAE), 233–253 (YLGI…GWLG), 256–276 (FLPP…FFIL), and 296–316 (VMLP…LSVP).

It belongs to the complex I subunit 1 family. As to quaternary structure, NDH-1 is composed of 14 different subunits. Subunits NuoA, H, J, K, L, M, N constitute the membrane sector of the complex.

It localises to the cell inner membrane. The enzyme catalyses a quinone + NADH + 5 H(+)(in) = a quinol + NAD(+) + 4 H(+)(out). Functionally, NDH-1 shuttles electrons from NADH, via FMN and iron-sulfur (Fe-S) centers, to quinones in the respiratory chain. The immediate electron acceptor for the enzyme in this species is believed to be ubiquinone. Couples the redox reaction to proton translocation (for every two electrons transferred, four hydrogen ions are translocated across the cytoplasmic membrane), and thus conserves the redox energy in a proton gradient. This subunit may bind ubiquinone. This chain is NADH-quinone oxidoreductase subunit H, found in Methylococcus capsulatus (strain ATCC 33009 / NCIMB 11132 / Bath).